Consider the following 635-residue polypeptide: Chaperone protein DnaK (635 aa).

Thr-198 carries the phosphothreonine; by autocatalysis modification. The disordered stretch occupies residues 597 to 635 (LYEQDQANNERHDTPETEKAEGDNVVDAEFQEIDDQDKK). Residues 604–618 (NNERHDTPETEKAEG) are compositionally biased toward basic and acidic residues. Residues 620–635 (NVVDAEFQEIDDQDKK) show a composition bias toward acidic residues.

The protein belongs to the heat shock protein 70 family.

Acts as a chaperone. In Zymomonas mobilis subsp. mobilis (strain ATCC 31821 / ZM4 / CP4), this protein is Chaperone protein DnaK.